The primary structure comprises 302 residues: Sulfate adenylyltransferase subunit 2 (302 aa).

It belongs to the PAPS reductase family. CysD subfamily. In terms of assembly, heterodimer composed of CysD, the smaller subunit, and CysN.

It catalyses the reaction sulfate + ATP + H(+) = adenosine 5'-phosphosulfate + diphosphate. The protein operates within sulfur metabolism; hydrogen sulfide biosynthesis; sulfite from sulfate: step 1/3. Functionally, with CysN forms the ATP sulfurylase (ATPS) that catalyzes the adenylation of sulfate producing adenosine 5'-phosphosulfate (APS) and diphosphate, the first enzymatic step in sulfur assimilation pathway. APS synthesis involves the formation of a high-energy phosphoric-sulfuric acid anhydride bond driven by GTP hydrolysis by CysN coupled to ATP hydrolysis by CysD. The polypeptide is Sulfate adenylyltransferase subunit 2 (Erwinia tasmaniensis (strain DSM 17950 / CFBP 7177 / CIP 109463 / NCPPB 4357 / Et1/99)).